The primary structure comprises 157 residues: F-box protein SNE (157 aa).

An F-box domain is found at 24 to 70 (PVFSINDHHDVLVEILRRLDGSSLCSAACVCRLWSAVARNDSIWEEL).

As to quaternary structure, part of a SCF (ASK-cullin-F-box) protein ligase complex. Interacts directly with SKP1A and SKP1B. In terms of tissue distribution, highly expressed in flowers and at much lower level in seedlings, rosette leaves and green siliques.

Its subcellular location is the nucleus. Its pathway is protein modification; protein ubiquitination. In terms of biological role, essential component of a SCF-type E3 ligase complex that positively regulates the gibberellin signaling pathway. Upon gibberellin treatment, such complex probably mediates the ubiquitination and subsequent degradation of DELLA proteins (GAI, RGA and RGL2), some repressors of the gibberellin pathway, leading to activate the pathway. Can partially complement the absence of GID2/SLY1. The chain is F-box protein SNE (SNE) from Arabidopsis thaliana (Mouse-ear cress).